We begin with the raw amino-acid sequence, 358 residues long: Trace amine-associated receptor 7c (358 aa).

Over 1–47 (MATDDDSFPWDQDSILSRDLLSASSLQLCYENLNRSCVRSPYSPGSR) the chain is Extracellular. The N-linked (GlcNAc...) asparagine glycan is linked to Asn-34. 2 cysteine pairs are disulfide-bonded: Cys-37-Cys-201 and Cys-120-Cys-205. The chain crosses the membrane as a helical span at residues 48–68 (LILYAVFGFGAVLAVCGNLLV). The Cytoplasmic portion of the chain corresponds to 69–83 (MTSILHFRQLHSPAN). The chain crosses the membrane as a helical span at residues 84–104 (FLVASLACADLLVGLTVMPFS). The Extracellular segment spans residues 105–125 (MVRSVEGCWYFGNTYCKFHSC). Residues 126-148 (FEGSFCYSSLFHLCFISLDRYIA) traverse the membrane as a helical segment. The Cytoplasmic portion of the chain corresponds to 149–166 (VSDPLIYPTRFTASISGK). A helical membrane pass occupies residues 167–187 (CITFSWLLSIIYSFSLLYTGA). Residues 188–211 (NEAGLEDLVSALTCVGGCQVAVNQ) are Extracellular-facing. Residues 212-232 (SWVFINFLLFLVPALVMMTVY) form a helical membrane-spanning segment. At 233-274 (SKIFLIAKQQAQNIEKMSKQTARASESYKDRVAKRERKAAKT) the chain is on the cytoplasmic side. Residues 275–295 (LGIAVAAFLLSWLPYFIDSII) traverse the membrane as a helical segment. Residues 296-309 (DAFLGFITPTYMYE) are Extracellular-facing. Residues 310-332 (ILVWIVYYNSAMNPLIYAFFYPW) form a helical membrane-spanning segment. The Cytoplasmic portion of the chain corresponds to 333 to 358 (FRKAIKLIVTGKILRENSSTINLFPE).

It belongs to the G-protein coupled receptor 1 family.

The protein localises to the cell membrane. Its function is as follows. Olfactory receptor specific for N,N-dimethylalkylamines trace amines. Trace amine compounds are enriched in animal body fluids and act on trace amine-associated receptors (TAARs) to elicit both intraspecific and interspecific innate behaviors. Ligand-binding causes a conformation change that triggers signaling via G(s)-class of G alpha proteins (GNAL or GNAS). This Rattus norvegicus (Rat) protein is Trace amine-associated receptor 7c.